Consider the following 134-residue polypeptide: Large ribosomal subunit protein uL22 (134 aa).

Belongs to the universal ribosomal protein uL22 family. As to quaternary structure, part of the 50S ribosomal subunit.

Functionally, this protein binds specifically to 23S rRNA; its binding is stimulated by other ribosomal proteins, e.g. L4, L17, and L20. It is important during the early stages of 50S assembly. It makes multiple contacts with different domains of the 23S rRNA in the assembled 50S subunit and ribosome. In terms of biological role, the globular domain of the protein is located near the polypeptide exit tunnel on the outside of the subunit, while an extended beta-hairpin is found that lines the wall of the exit tunnel in the center of the 70S ribosome. The polypeptide is Large ribosomal subunit protein uL22 (Rhodococcus erythropolis (strain PR4 / NBRC 100887)).